The primary structure comprises 280 residues: UPF0494 membrane protein SPAC212.01c (280 aa).

A run of 4 helical transmembrane segments spans residues 107-127 (WPLL…KFEV), 144-164 (IWVP…SLIF), 178-198 (VIIA…GMII), and 199-219 (AALG…LYFG).

The protein belongs to the UPF0494 family.

It is found in the membrane. This Schizosaccharomyces pombe (strain 972 / ATCC 24843) (Fission yeast) protein is UPF0494 membrane protein SPAC212.01c.